A 175-amino-acid chain; its full sequence is Coagulogen (175 aa).

8 cysteine pairs are disulfide-bonded: Cys-8–Cys-167, Cys-10–Cys-95, Cys-60–Cys-161, Cys-65–Cys-121, Cys-75–Cys-168, Cys-88–Cys-140, Cys-127–Cys-170, and Cys-134–Cys-172.

This sequence belongs to the coagulin family. In terms of assembly, coagulogen is cleaved after Arg-18 and Arg-46 by a clotting enzyme contained in the hemocyte and activated by a bacterial endotoxin (lipopolysaccharide). This cleavage releases the peptide C and leaves 2 chains of coagulin, A and B, linked by two disulfide bonds. Coagulin molecules interlink to form a gel. Hemolymph.

It is found in the secreted. Coagulogen is a gel-forming protein of hemolymph; it hinders the spread of invaders by immobilizing them. This Tachypleus gigas (Southeast Asian horseshoe crab) protein is Coagulogen.